The primary structure comprises 321 residues: Lipoyl synthase (321 aa).

Positions 68, 73, 79, 94, 98, 101, and 308 each coordinate [4Fe-4S] cluster. The Radical SAM core domain occupies 80–297 (FNHGTATFMI…KDVAMGLGFS (218 aa)).

This sequence belongs to the radical SAM superfamily. Lipoyl synthase family. [4Fe-4S] cluster is required as a cofactor.

It is found in the cytoplasm. It carries out the reaction [[Fe-S] cluster scaffold protein carrying a second [4Fe-4S](2+) cluster] + N(6)-octanoyl-L-lysyl-[protein] + 2 oxidized [2Fe-2S]-[ferredoxin] + 2 S-adenosyl-L-methionine + 4 H(+) = [[Fe-S] cluster scaffold protein] + N(6)-[(R)-dihydrolipoyl]-L-lysyl-[protein] + 4 Fe(3+) + 2 hydrogen sulfide + 2 5'-deoxyadenosine + 2 L-methionine + 2 reduced [2Fe-2S]-[ferredoxin]. It participates in protein modification; protein lipoylation via endogenous pathway; protein N(6)-(lipoyl)lysine from octanoyl-[acyl-carrier-protein]: step 2/2. In terms of biological role, catalyzes the radical-mediated insertion of two sulfur atoms into the C-6 and C-8 positions of the octanoyl moiety bound to the lipoyl domains of lipoate-dependent enzymes, thereby converting the octanoylated domains into lipoylated derivatives. This is Lipoyl synthase from Aeromonas hydrophila subsp. hydrophila (strain ATCC 7966 / DSM 30187 / BCRC 13018 / CCUG 14551 / JCM 1027 / KCTC 2358 / NCIMB 9240 / NCTC 8049).